The sequence spans 200 residues: uncharacterized protein (200 aa).

Disordered regions lie at residues 1 to 27, 42 to 79, and 169 to 200; these read MTDT…EAET, IPKE…STNA, and HGRA…EHGR. The segment covering 187–200 has biased composition (basic and acidic residues); that stretch reads RQMEKTGAGREHGR.

This is an uncharacterized protein from Shigella flexneri.